We begin with the raw amino-acid sequence, 62 residues long: Flavodoxin (62 aa).

Residues 4 to 62 form the Flavodoxin-like domain; sequence IGIFFGTDTGKTRKIAKMIHKQLGELADAPVNINRTTLDDFMAYPVLLLGTPTLGDGQL.

This sequence belongs to the flavodoxin family. It depends on FMN as a cofactor.

Low-potential electron donor to a number of redox enzymes. NifF is the electron donor to nitrogenase. This is Flavodoxin (nifF) from Klebsiella oxytoca.